The primary structure comprises 841 residues: DNA ligase (841 aa).

Residues 33-37, 82-83, and E114 contribute to the NAD(+) site; these read DAQYD and SL. The N6-AMP-lysine intermediate role is filled by K116. The NAD(+) site is built by R137, E174, K300, and K324. Positions 418, 421, 436, and 442 each coordinate Zn(2+). One can recognise a BRCT domain in the interval 758 to 841; sequence EKTGPLDGQT…AFLGEHGQQR (84 aa).

It belongs to the NAD-dependent DNA ligase family. LigA subfamily. Mg(2+) serves as cofactor. Requires Mn(2+) as cofactor.

It catalyses the reaction NAD(+) + (deoxyribonucleotide)n-3'-hydroxyl + 5'-phospho-(deoxyribonucleotide)m = (deoxyribonucleotide)n+m + AMP + beta-nicotinamide D-nucleotide.. In terms of biological role, DNA ligase that catalyzes the formation of phosphodiester linkages between 5'-phosphoryl and 3'-hydroxyl groups in double-stranded DNA using NAD as a coenzyme and as the energy source for the reaction. It is essential for DNA replication and repair of damaged DNA. This chain is DNA ligase, found in Xanthomonas oryzae pv. oryzae (strain KACC10331 / KXO85).